Here is a 258-residue protein sequence, read N- to C-terminus: Imidazole glycerol phosphate synthase subunit HisF (258 aa).

Active-site residues include Asp12 and Asp131.

This sequence belongs to the HisA/HisF family. Heterodimer of HisH and HisF.

The protein resides in the cytoplasm. The catalysed reaction is 5-[(5-phospho-1-deoxy-D-ribulos-1-ylimino)methylamino]-1-(5-phospho-beta-D-ribosyl)imidazole-4-carboxamide + L-glutamine = D-erythro-1-(imidazol-4-yl)glycerol 3-phosphate + 5-amino-1-(5-phospho-beta-D-ribosyl)imidazole-4-carboxamide + L-glutamate + H(+). Its pathway is amino-acid biosynthesis; L-histidine biosynthesis; L-histidine from 5-phospho-alpha-D-ribose 1-diphosphate: step 5/9. In terms of biological role, IGPS catalyzes the conversion of PRFAR and glutamine to IGP, AICAR and glutamate. The HisF subunit catalyzes the cyclization activity that produces IGP and AICAR from PRFAR using the ammonia provided by the HisH subunit. The protein is Imidazole glycerol phosphate synthase subunit HisF of Nitrosomonas europaea (strain ATCC 19718 / CIP 103999 / KCTC 2705 / NBRC 14298).